The sequence spans 341 residues: Basic membrane protein B (341 aa).

The first 14 residues, 1–14 (MRIVIFILGILLTS), serve as a signal peptide directing secretion. A lipid anchor (N-palmitoyl cysteine) is attached at Cys15. Cys15 carries the S-diacylglycerol cysteine lipid modification.

The protein belongs to the BMP lipoprotein family. As to quaternary structure, monomer.

The protein localises to the cell inner membrane. Functionally, may be part of an ABC-type nucleoside uptake system involved in the purine salvage pathway. The protein is Basic membrane protein B (bmpB) of Borrelia garinii subsp. bavariensis (strain ATCC BAA-2496 / DSM 23469 / PBi) (Borreliella bavariensis).